Consider the following 209-residue polypeptide: Large ribosomal subunit protein uL3 (209 aa).

Gln150 carries the post-translational modification N5-methylglutamine.

Belongs to the universal ribosomal protein uL3 family. Part of the 50S ribosomal subunit. Forms a cluster with proteins L14 and L19. Methylated by PrmB.

In terms of biological role, one of the primary rRNA binding proteins, it binds directly near the 3'-end of the 23S rRNA, where it nucleates assembly of the 50S subunit. This Buchnera aphidicola subsp. Acyrthosiphon pisum (strain 5A) protein is Large ribosomal subunit protein uL3.